The primary structure comprises 685 residues: ATP-dependent zinc metalloprotease FTSH 8, chloroplastic (685 aa).

The N-terminal 37 residues, methionine 1–lysine 37, are a transit peptide targeting the chloroplast. The N-terminal 36 residues, alanine 38–alanine 73, are a transit peptide targeting the thylakoid. Residues alanine 38 to proline 161 are Lumenal, thylakoid-facing. Residues isoleucine 162–leucine 182 form a helical membrane-spanning segment. At serine 183–valine 685 the chain is on the stromal side. Glycine 260–threonine 267 is a binding site for ATP. A Zn(2+)-binding site is contributed by histidine 481. Glutamate 482 is an active-site residue. 2 residues coordinate Zn(2+): histidine 485 and aspartate 559.

In the N-terminal section; belongs to the AAA ATPase family. This sequence in the C-terminal section; belongs to the peptidase M41 family. Heterohexamers with FTSH1, FTSH2 and FTSH5. May also form homooligomers. Requires Zn(2+) as cofactor. In terms of tissue distribution, expressed in cotyledons, cauline and rosette leaves, stems, sepals, flovers and siliques. Very low in roots.

The protein localises to the plastid. Its subcellular location is the chloroplast thylakoid membrane. Part of a complex that function as an ATP-dependent zinc metallopeptidase. Involved in the thylakoid formation and in the removal of damaged D1 in the photosystem II, preventing cell death under high-intensity light conditions. In Arabidopsis thaliana (Mouse-ear cress), this protein is ATP-dependent zinc metalloprotease FTSH 8, chloroplastic (FTSH8).